Reading from the N-terminus, the 159-residue chain is MAVLLKLGVLCSGQGARALSLRSRAVRPAFVSAFLQDQPTPGWRGTQHIHLSPSHQSGSKAASLHWTSERVVSVLLLGLIPAGYLNPCSVVDYSLAAALTLHSHWGIGQVVTDYVHGDALQKATKAGLLAVSALTFAGLCYFNYHDVGICRAVAMLWKL.

A mitochondrion-targeting transit peptide spans 1–56 (MAVLLKLGVLCSGQGARALSLRSRAVRPAFVSAFLQDQPTPGWRGTQHIHLSPSHQ). Over 57–63 (SGSKAAS) the chain is Mitochondrial matrix. A helical membrane pass occupies residues 64 to 85 (LHWTSERVVSVLLLGLIPAGYL). Topologically, residues 86–90 (NPCSV) are mitochondrial intermembrane. Residues 91–111 (VDYSLAAALTLHSHWGIGQVV) traverse the membrane as a helical segment. Histidine 102 serves as a coordination point for heme b. Topologically, residues 112-120 (TDYVHGDAL) are mitochondrial matrix. A ubiquinone is bound at residue tyrosine 114. The chain crosses the membrane as a helical span at residues 121–142 (QKATKAGLLAVSALTFAGLCYF). Topologically, residues 143-159 (NYHDVGICRAVAMLWKL) are mitochondrial intermembrane.

Belongs to the CybS family. In terms of assembly, component of complex II composed of four subunits: the flavoprotein (FP) SDHA, iron-sulfur protein (IP) SDHB, and a cytochrome b560 composed of SDHC and SDHD.

It localises to the mitochondrion inner membrane. It participates in carbohydrate metabolism; tricarboxylic acid cycle. Its function is as follows. Membrane-anchoring subunit of succinate dehydrogenase (SDH) that is involved in complex II of the mitochondrial electron transport chain and is responsible for transferring electrons from succinate to ubiquinone (coenzyme Q). SDH also oxidizes malate to the non-canonical enol form of oxaloacetate, enol-oxaloacetate. Enol-oxaloacetate, which is a potent inhibitor of the succinate dehydrogenase activity, is further isomerized into keto-oxaloacetate. This Rattus norvegicus (Rat) protein is Succinate dehydrogenase [ubiquinone] cytochrome b small subunit, mitochondrial (Sdhd).